The sequence spans 1458 residues: GTPase-activating protein and VPS9 domain-containing protein 1 (1458 aa).

One can recognise a Ras-GAP domain in the interval 147–385 (SYLLQVLRYL…AAFLDVVIGG (239 aa)). Ser-227 carries the post-translational modification Phosphoserine. Residues Thr-390 and Thr-458 each carry the phosphothreonine modification. Positions 447–475 (AKPGKSSSLDMTPYSTPQMSPATTPANKK) are disordered. The segment covering 451 to 473 (KSSSLDMTPYSTPQMSPATTPAN) has biased composition (polar residues). Tyr-460 bears the Phosphotyrosine mark. Ser-466 carries the post-translational modification Phosphoserine. At Thr-470 the chain carries Phosphothreonine. A phosphoserine mark is found at Ser-566 and Ser-569. Disordered regions lie at residues 574–608 (GISEGPSNRSNSVSSLDLEGESVSELGAGPSGSNG), 738–821 (LESC…PSQS), and 846–867 (HYARPSHPPPDPPILEGAVGGN). Residues 578–588 (GPSNRSNSVSS) show a composition bias toward polar residues. Ser-742, Ser-746, and Ser-757 each carry phosphoserine. Positions 758–777 (SRPSTPGLSVVSGISATSED) are enriched in polar residues. Phosphothreonine is present on Thr-762. At Ser-766 the chain carries Phosphoserine. A compositionally biased stretch (basic and acidic residues) spans 778 to 789 (IPNKIEDLRSEC). Phosphoserine is present on residues Ser-876, Ser-902, Ser-903, Ser-908, and Ser-914. Positions 888–902 (KQRHSYPERLVRSRS) are enriched in basic and acidic residues. Disordered stretches follow at residues 888–1022 (KQRH…RLSA) and 1039–1072 (KRTSPSEGAMANDESAEVMGDGESAHDSPREEAL). Residues 930–951 (AAATGATSLVAAPHSSSSSPSK) are compositionally biased toward low complexity. 2 stretches are compositionally biased toward basic and acidic residues: residues 952-973 (DSSRGETEERKDSDDERSDRSR) and 995-1006 (EKQEKDKDDLGP). Ser-964 carries the post-translational modification Phosphoserine. The span at 1010–1022 (STLTDEPSPRLSA) shows a compositional bias: polar residues. Phosphoserine occurs at positions 1017 and 1044. The segment covering 1061–1071 (ESAHDSPREEA) has biased composition (basic and acidic residues). 2 positions are modified to phosphoserine: Ser-1076 and Ser-1083. In terms of domain architecture, VPS9 spans 1318 to 1458 (ILRDQVLHEH…EFIKTIDDRK (141 aa)).

Belongs to the GAPVD1 family. In terms of assembly, interacts with RAB5A. Interacts with TRIP10/CIP4. In terms of tissue distribution, present in adipocytes and fibroblasts (at protein level). Ubiquitously expressed.

It localises to the membrane. The protein resides in the endosome. Acts both as a GTPase-activating protein (GAP) and a guanine nucleotide exchange factor (GEF), and participates in various processes such as endocytosis, insulin receptor internalization or LC2A4/GLUT4 trafficking. Acts as a GEF for the Ras-related protein RAB31 by exchanging bound GDP for free GTP, leading to regulate LC2A4/GLUT4 trafficking. In the absence of insulin, it maintains RAB31 in an active state and promotes a futile cycle between LC2A4/GLUT4 storage vesicles and early endosomes, retaining LC2A4/GLUT4 inside the cells. Upon insulin stimulation, it is translocated to the plasma membrane, releasing LC2A4/GLUT4 from intracellular storage vesicles. Also involved in EGFR trafficking and degradation, possibly by promoting EGFR ubiquitination and subsequent degradation by the proteasome. Has GEF activity for Rab5 and GAP activity for Ras. In Mus musculus (Mouse), this protein is GTPase-activating protein and VPS9 domain-containing protein 1 (Gapvd1).